A 103-amino-acid chain; its full sequence is MSQFDNVSVIKQANVYFGGKCISHTVQFPDGSRKTLGVILPSTLHFETGAPEVMEIVAGGCRVQLAGQTGWQSYQAGDSFSIPGNSGFQIEVSDTLHYVCHFG.

The protein belongs to the nucleoside phosphorylase PpnP family.

The catalysed reaction is a purine D-ribonucleoside + phosphate = a purine nucleobase + alpha-D-ribose 1-phosphate. It catalyses the reaction adenosine + phosphate = alpha-D-ribose 1-phosphate + adenine. It carries out the reaction cytidine + phosphate = cytosine + alpha-D-ribose 1-phosphate. The enzyme catalyses guanosine + phosphate = alpha-D-ribose 1-phosphate + guanine. The catalysed reaction is inosine + phosphate = alpha-D-ribose 1-phosphate + hypoxanthine. It catalyses the reaction thymidine + phosphate = 2-deoxy-alpha-D-ribose 1-phosphate + thymine. It carries out the reaction uridine + phosphate = alpha-D-ribose 1-phosphate + uracil. The enzyme catalyses xanthosine + phosphate = alpha-D-ribose 1-phosphate + xanthine. Catalyzes the phosphorolysis of diverse nucleosides, yielding D-ribose 1-phosphate and the respective free bases. Can use uridine, adenosine, guanosine, cytidine, thymidine, inosine and xanthosine as substrates. Also catalyzes the reverse reactions. The chain is Pyrimidine/purine nucleoside phosphorylase from Methylococcus capsulatus (strain ATCC 33009 / NCIMB 11132 / Bath).